Consider the following 932-residue polypeptide: Protein translocase subunit SecA (932 aa).

Residues Gln83, Gly101 to Thr105, and Asp491 each bind ATP.

The protein belongs to the SecA family. Monomer and homodimer. Part of the essential Sec protein translocation apparatus which comprises SecA, SecYEG and auxiliary proteins SecDF. Other proteins may also be involved.

The protein localises to the cell inner membrane. It localises to the cellular thylakoid membrane. The protein resides in the cytoplasm. The catalysed reaction is ATP + H2O + cellular proteinSide 1 = ADP + phosphate + cellular proteinSide 2.. Part of the Sec protein translocase complex. Interacts with the SecYEG preprotein conducting channel. Has a central role in coupling the hydrolysis of ATP to the transfer of proteins into and across the cell membrane, serving as an ATP-driven molecular motor driving the stepwise translocation of polypeptide chains across the membrane. Functionally, probably participates in protein translocation into and across both the cytoplasmic and thylakoid membranes in cyanobacterial cells. The chain is Protein translocase subunit SecA from Cyanothece sp. (strain PCC 7425 / ATCC 29141).